Reading from the N-terminus, the 130-residue chain is Small ribosomal subunit protein uS8 (130 aa).

This sequence belongs to the universal ribosomal protein uS8 family. Part of the 30S ribosomal subunit.

Functionally, one of the primary rRNA binding proteins, it binds directly to 16S rRNA central domain where it helps coordinate assembly of the platform of the 30S subunit. This Methanococcus maripaludis (strain C7 / ATCC BAA-1331) protein is Small ribosomal subunit protein uS8.